Here is a 933-residue protein sequence, read N- to C-terminus: Phosphoenolpyruvate carboxylase (933 aa).

Residues histidine 158 and lysine 592 contribute to the active site.

It belongs to the PEPCase type 1 family. Mg(2+) serves as cofactor.

It carries out the reaction oxaloacetate + phosphate = phosphoenolpyruvate + hydrogencarbonate. Functionally, forms oxaloacetate, a four-carbon dicarboxylic acid source for the tricarboxylic acid cycle. In Nitrosomonas eutropha (strain DSM 101675 / C91 / Nm57), this protein is Phosphoenolpyruvate carboxylase.